The sequence spans 176 residues: Adenylyl-sulfate kinase (176 aa).

Glycine 12–serine 19 contacts ATP. Residue serine 86 is the Phosphoserine intermediate of the active site.

This sequence belongs to the APS kinase family.

The enzyme catalyses adenosine 5'-phosphosulfate + ATP = 3'-phosphoadenylyl sulfate + ADP + H(+). The protein operates within sulfur metabolism; hydrogen sulfide biosynthesis; sulfite from sulfate: step 2/3. Catalyzes the synthesis of activated sulfate. The polypeptide is Adenylyl-sulfate kinase (Gloeothece citriformis (strain PCC 7424) (Cyanothece sp. (strain PCC 7424))).